The primary structure comprises 244 residues: UDP-2,3-diacylglucosamine hydrolase (244 aa).

Positions 8, 10, 41, 79, and 114 each coordinate Mn(2+). Residue 79–80 (NR) coordinates substrate. Positions 122, 164, 167, and 195 each coordinate substrate. Residues H195 and H197 each coordinate Mn(2+).

The protein belongs to the LpxH family. Requires Mn(2+) as cofactor.

The protein resides in the cell inner membrane. The enzyme catalyses UDP-2-N,3-O-bis[(3R)-3-hydroxytetradecanoyl]-alpha-D-glucosamine + H2O = 2-N,3-O-bis[(3R)-3-hydroxytetradecanoyl]-alpha-D-glucosaminyl 1-phosphate + UMP + 2 H(+). It participates in glycolipid biosynthesis; lipid IV(A) biosynthesis; lipid IV(A) from (3R)-3-hydroxytetradecanoyl-[acyl-carrier-protein] and UDP-N-acetyl-alpha-D-glucosamine: step 4/6. Functionally, hydrolyzes the pyrophosphate bond of UDP-2,3-diacylglucosamine to yield 2,3-diacylglucosamine 1-phosphate (lipid X) and UMP by catalyzing the attack of water at the alpha-P atom. Involved in the biosynthesis of lipid A, a phosphorylated glycolipid that anchors the lipopolysaccharide to the outer membrane of the cell. The polypeptide is UDP-2,3-diacylglucosamine hydrolase (Vibrio atlanticus (strain LGP32) (Vibrio splendidus (strain Mel32))).